The following is a 709-amino-acid chain: Phosphoribosylformylglycinamidine synthase subunit PurL (709 aa).

His-36 is a catalytic residue. The ATP site is built by Tyr-39 and Lys-80. Glu-82 is a binding site for Mg(2+). Substrate-binding positions include 83–86 (SHNH) and Arg-105. His-84 serves as the catalytic Proton acceptor. A Mg(2+)-binding site is contributed by Asp-106. A substrate-binding site is contributed by Gln-226. Residue Asp-252 coordinates Mg(2+). 294–296 (ETQ) is a binding site for substrate. Residues Asp-470 and Gly-507 each contribute to the ATP site. Ser-510 serves as a coordination point for substrate.

It belongs to the FGAMS family. As to quaternary structure, monomer. Part of the FGAM synthase complex composed of 1 PurL, 1 PurQ and 2 PurS subunits.

Its subcellular location is the cytoplasm. It catalyses the reaction N(2)-formyl-N(1)-(5-phospho-beta-D-ribosyl)glycinamide + L-glutamine + ATP + H2O = 2-formamido-N(1)-(5-O-phospho-beta-D-ribosyl)acetamidine + L-glutamate + ADP + phosphate + H(+). It participates in purine metabolism; IMP biosynthesis via de novo pathway; 5-amino-1-(5-phospho-D-ribosyl)imidazole from N(2)-formyl-N(1)-(5-phospho-D-ribosyl)glycinamide: step 1/2. In terms of biological role, part of the phosphoribosylformylglycinamidine synthase complex involved in the purines biosynthetic pathway. Catalyzes the ATP-dependent conversion of formylglycinamide ribonucleotide (FGAR) and glutamine to yield formylglycinamidine ribonucleotide (FGAM) and glutamate. The FGAM synthase complex is composed of three subunits. PurQ produces an ammonia molecule by converting glutamine to glutamate. PurL transfers the ammonia molecule to FGAR to form FGAM in an ATP-dependent manner. PurS interacts with PurQ and PurL and is thought to assist in the transfer of the ammonia molecule from PurQ to PurL. This is Phosphoribosylformylglycinamidine synthase subunit PurL from Saccharolobus islandicus (strain M.16.27) (Sulfolobus islandicus).